The chain runs to 369 residues: Tetraacyldisaccharide 4'-kinase (369 aa).

Residue 52–59 (TVGGTGKT) coordinates ATP.

Belongs to the LpxK family.

It catalyses the reaction a lipid A disaccharide + ATP = a lipid IVA + ADP + H(+). It functions in the pathway glycolipid biosynthesis; lipid IV(A) biosynthesis; lipid IV(A) from (3R)-3-hydroxytetradecanoyl-[acyl-carrier-protein] and UDP-N-acetyl-alpha-D-glucosamine: step 6/6. In terms of biological role, transfers the gamma-phosphate of ATP to the 4'-position of a tetraacyldisaccharide 1-phosphate intermediate (termed DS-1-P) to form tetraacyldisaccharide 1,4'-bis-phosphate (lipid IVA). In Parabacteroides distasonis (strain ATCC 8503 / DSM 20701 / CIP 104284 / JCM 5825 / NCTC 11152), this protein is Tetraacyldisaccharide 4'-kinase.